A 406-amino-acid polypeptide reads, in one-letter code: Succinylornithine transaminase (406 aa).

Residue Lys-252 is modified to N6-(pyridoxal phosphate)lysine.

This sequence belongs to the class-III pyridoxal-phosphate-dependent aminotransferase family. AstC subfamily. The cofactor is pyridoxal 5'-phosphate.

The enzyme catalyses N(2)-succinyl-L-ornithine + 2-oxoglutarate = N-succinyl-L-glutamate 5-semialdehyde + L-glutamate. Its pathway is amino-acid degradation; L-arginine degradation via AST pathway; L-glutamate and succinate from L-arginine: step 3/5. Catalyzes the transamination of N(2)-succinylornithine and alpha-ketoglutarate into N(2)-succinylglutamate semialdehyde and glutamate. Can also act as an acetylornithine aminotransferase. The polypeptide is Succinylornithine transaminase (Escherichia coli O127:H6 (strain E2348/69 / EPEC)).